The sequence spans 481 residues: 6-phosphogluconate dehydrogenase, decarboxylating (481 aa).

NADP(+) contacts are provided by residues 11–16 (GLAVMG), 34–36 (NRT), 76–78 (VKG), and N104. Residues N104 and 130–132 (SGG) each bind substrate. K184 serves as the catalytic Proton acceptor. 187-188 (HN) lines the substrate pocket. E191 (proton donor) is an active-site residue. Residues Y192, K259, R286, R445, and H451 each contribute to the substrate site.

The protein belongs to the 6-phosphogluconate dehydrogenase family. As to quaternary structure, homodimer.

The enzyme catalyses 6-phospho-D-gluconate + NADP(+) = D-ribulose 5-phosphate + CO2 + NADPH. It participates in carbohydrate degradation; pentose phosphate pathway; D-ribulose 5-phosphate from D-glucose 6-phosphate (oxidative stage): step 3/3. Its function is as follows. Catalyzes the oxidative decarboxylation of 6-phosphogluconate to ribulose 5-phosphate and CO(2), with concomitant reduction of NADP to NADPH. This is 6-phosphogluconate dehydrogenase, decarboxylating (Pgd) from Drosophila simulans (Fruit fly).